The primary structure comprises 152 residues: Keratin, high-sulfur matrix protein, B2C (152 aa).

A2 is modified (N-acetylalanine). Repeats lie at residues 27 to 36 (STCSQTSCCQ), 37 to 46 (PTSIQTSCCQ), and 47 to 56 (PTCLQTSGCE).

The keratin products of mammalian epidermal derivatives such as wool and hair consist of microfibrils embedded in a rigid matrix of other proteins. The matrix proteins include the high-sulfur and high-tyrosine keratins, having molecular weights of 6-20 kDa, whereas the microfibrils contain the larger, low-sulfur keratins (40-56 kDa). The protein is Keratin, high-sulfur matrix protein, B2C of Ovis aries (Sheep).